The chain runs to 391 residues: Ribonuclease 3-like protein 2 (391 aa).

The Nuclear export signal signature appears at 7 to 26 (PEYNFPAITRCSLSNSLPHR). An RNase III domain is found at 60–203 (MEAVEKILNY…LAGAVYVDVN (144 aa)). Residues glutamate 96, aspartate 189, and glutamate 192 each contribute to the Mg(2+) site. DRBM domains follow at residues 218 to 294 (EPIV…KLSE) and 313 to 387 (HAKT…ALRK). Cysteine 240 and cysteine 322 are disulfide-bonded. The Bipartite nuclear localization motif lies at 371-387 (KKAESSSAYHMIRALRK).

Homodimer; disulfide-linked. Mg(2+) is required as a cofactor. It depends on Mn(2+) as a cofactor. Expressed in seeds, leaves and flower buds.

The protein localises to the nucleus. It is found in the cytoplasm. Its function is as follows. Ribonuclease that cleaves double-stranded RNA (dsRNA). Required for 3'-external transcribed spacer (ETS) cleavage of the pre-rRNA precursors. May promote the production of 21 nucleotide small interfering RNA (siRNA) during post-transcriptional gene silencing (PTGS). This chain is Ribonuclease 3-like protein 2 (RTL2), found in Arabidopsis thaliana (Mouse-ear cress).